The primary structure comprises 141 residues: ATP synthase epsilon chain (141 aa).

The protein belongs to the ATPase epsilon chain family. As to quaternary structure, F-type ATPases have 2 components, CF(1) - the catalytic core - and CF(0) - the membrane proton channel. CF(1) has five subunits: alpha(3), beta(3), gamma(1), delta(1), epsilon(1). CF(0) has three main subunits: a, b and c.

The protein resides in the cell membrane. Functionally, produces ATP from ADP in the presence of a proton gradient across the membrane. This Lactococcus lactis subsp. cremoris (strain MG1363) protein is ATP synthase epsilon chain.